The sequence spans 645 residues: UvrABC system protein B (645 aa).

In terms of domain architecture, Helicase ATP-binding spans 24 to 414 (AGLNDNKRDQ…LFVEQVIRPT (391 aa)). ATP is bound at residue 37 to 44 (GVTGSGKT). A Beta-hairpin motif is present at residues 90-113 (YYDYYQPEAYLPQTDTYIEKDSVI). Positions 426 to 591 (AEAQVYDVVH…VLPKTIIKPI (166 aa)) constitute a Helicase C-terminal domain. One can recognise a UVR domain in the interval 610–645 (KDTVSSLRKQMLAHAKNLEFEEAAKIKNIIGRINNL).

The protein belongs to the UvrB family. Forms a heterotetramer with UvrA during the search for lesions. Interacts with UvrC in an incision complex.

It localises to the cytoplasm. Its function is as follows. The UvrABC repair system catalyzes the recognition and processing of DNA lesions. A damage recognition complex composed of 2 UvrA and 2 UvrB subunits scans DNA for abnormalities. Upon binding of the UvrA(2)B(2) complex to a putative damaged site, the DNA wraps around one UvrB monomer. DNA wrap is dependent on ATP binding by UvrB and probably causes local melting of the DNA helix, facilitating insertion of UvrB beta-hairpin between the DNA strands. Then UvrB probes one DNA strand for the presence of a lesion. If a lesion is found the UvrA subunits dissociate and the UvrB-DNA preincision complex is formed. This complex is subsequently bound by UvrC and the second UvrB is released. If no lesion is found, the DNA wraps around the other UvrB subunit that will check the other stand for damage. This chain is UvrABC system protein B, found in Wolbachia sp. subsp. Brugia malayi (strain TRS).